The chain runs to 158 residues: UPF0725 protein At3g57210 (158 aa).

This sequence belongs to the UPF0725 (EMB2204) family.

This is UPF0725 protein At3g57210 from Arabidopsis thaliana (Mouse-ear cress).